Here is an 81-residue protein sequence, read N- to C-terminus: Penaeidin-3c (81 aa).

Positions 1–19 (MRLVVCLVFLASFALVCQG) are cleaved as a signal peptide. The residue at position 20 (glutamine 20) is a Pyrrolidone carboxylic acid. 3 disulfide bridges follow: cysteine 50–cysteine 65, cysteine 54–cysteine 72, and cysteine 66–cysteine 73. A Serine amide modification is found at serine 80.

Belongs to the penaeidin family. In terms of tissue distribution, higher expression in hemocytes and to a lesser extent in heart, testis, gills, intestine, lymphoid organ and hepatopancreas. Traces in eyes and subcuticular epithelium. Not present in the brain.

Its subcellular location is the cytoplasmic granule. Antibacterial activity against M.luteus and E.coli bacteria. Antifungal activity against N.crassa and F.oxysporum. Presents chitin-binding activity. This Penaeus vannamei (Whiteleg shrimp) protein is Penaeidin-3c.